The sequence spans 537 residues: Phosphoenolpyruvate carboxykinase (ATP) (537 aa).

Positions 61, 194, and 200 each coordinate substrate. Residues Lys-200, His-219, and 235-243 (GLSGTGKTT) contribute to the ATP site. Residues Lys-200 and His-219 each contribute to the Mn(2+) site. Residue Asp-256 coordinates Mn(2+). Residues Glu-284, Arg-322, and Thr-448 each coordinate ATP. Residue Arg-322 coordinates substrate.

The protein belongs to the phosphoenolpyruvate carboxykinase (ATP) family. Mn(2+) is required as a cofactor.

It localises to the cytoplasm. The enzyme catalyses oxaloacetate + ATP = phosphoenolpyruvate + ADP + CO2. It participates in carbohydrate biosynthesis; gluconeogenesis. In terms of biological role, involved in the gluconeogenesis. Catalyzes the conversion of oxaloacetate (OAA) to phosphoenolpyruvate (PEP) through direct phosphoryl transfer between the nucleoside triphosphate and OAA. The sequence is that of Phosphoenolpyruvate carboxykinase (ATP) from Bradyrhizobium sp. (strain BTAi1 / ATCC BAA-1182).